Reading from the N-terminus, the 152-residue chain is MSTINTDTNETMPHISVNAQYIKDLSLENPSAPSSLAALDQRPQIDLSLDINITNLSEESFYEVELNIEAIARNEKYKLFQVELKYAGVFNLINIDSEQHPVLLSVHCPAMIFPFARKIIASCTQDAGFQPLMIDPIDFGALYHKKMSEHQN.

Belongs to the SecB family. As to quaternary structure, homotetramer, a dimer of dimers. One homotetramer interacts with 1 SecA dimer.

The protein localises to the cytoplasm. One of the proteins required for the normal export of preproteins out of the cell cytoplasm. It is a molecular chaperone that binds to a subset of precursor proteins, maintaining them in a translocation-competent state. It also specifically binds to its receptor SecA. This chain is Protein-export protein SecB, found in Rickettsia rickettsii (strain Iowa).